A 295-amino-acid chain; its full sequence is ATP synthase gamma chain (295 aa).

This sequence belongs to the ATPase gamma chain family. As to quaternary structure, F-type ATPases have 2 components, CF(1) - the catalytic core - and CF(0) - the membrane proton channel. CF(1) has five subunits: alpha(3), beta(3), gamma(1), delta(1), epsilon(1). CF(0) has three main subunits: a, b and c.

Its subcellular location is the cell inner membrane. Its function is as follows. Produces ATP from ADP in the presence of a proton gradient across the membrane. The gamma chain is believed to be important in regulating ATPase activity and the flow of protons through the CF(0) complex. The sequence is that of ATP synthase gamma chain from Cytophaga hutchinsonii (strain ATCC 33406 / DSM 1761 / CIP 103989 / NBRC 15051 / NCIMB 9469 / D465).